The sequence spans 725 residues: mRNA decay activator protein ZFP36L3 (725 aa).

Positions 1 to 25 (MANNNLNRPLNTNVADSSNSSSTPG) are enriched in low complexity. Residues 1-119 (MANNNLNRPL…KVSGSSSLAT (119 aa)) are disordered. 2 stretches are compositionally biased toward polar residues: residues 42–72 (APSSSASSLTEDCSSSFARDLNSYNNGQSGA) and 100–119 (HSLQQKPKPQKVSGSSSLAT). 2 C3H1-type zinc fingers span residues 122 to 150 (RYKTELCRPFEESGICKYGHKCQFAHGYR) and 160 to 188 (KYKTEPCRTFHSVGFCPYGTRCHFIHNQP). Residues 193–711 (VLSESTLEEP…ESEFDNTNSS (519 aa)) form a necessary for cytoplasmic localization region. The tract at residues 276-310 (STTAHDADKDPDKDADKDPSNNSANDALAFPQEPG) is disordered. The span at 280-294 (HDADKDPDKDADKDP) shows a compositional bias: basic and acidic residues. A run of 4 helical transmembrane segments spans residues 380–400 (LAPAAALTPAAALAPGAAMAL), 420–440 (AALALGAAMAAGAALAPGAAM), 441–461 (APGAAMATGAALAFGAAMATG), and 468–488 (AAMALGAAMATGAALAPGAAV). The disordered stretch occupies residues 686–709 (DEDDFLRRSSSSSSLNESEFDNTN). Over residues 693–702 (RSSSSSSLNE) the composition is skewed to low complexity.

Expressed in placenta and extraembryonic tissues (at protein level). Not detected in embryos and fetus.

The protein resides in the cytoplasm. The protein localises to the membrane. In terms of biological role, placenta-specific zinc-finger RNA-binding protein that destabilizes cytoplasmic AU-rich element (ARE)-containing mRNA transcripts by promoting their poly(A) tail removal or deadenylation, and hence provide a mechanism for attenuating protein synthesis. Binds to the 3'-UTR ARE of placental target mRNAs, such as TNF, HBEGF and LIPG. Involved in placental expression of many genes important for normal placental physiology. The polypeptide is mRNA decay activator protein ZFP36L3 (Mus musculus (Mouse)).